We begin with the raw amino-acid sequence, 97 residues long: Co-chaperonin GroES (97 aa).

The protein belongs to the GroES chaperonin family. As to quaternary structure, heptamer of 7 subunits arranged in a ring. Interacts with the chaperonin GroEL.

Its subcellular location is the cytoplasm. Its function is as follows. Together with the chaperonin GroEL, plays an essential role in assisting protein folding. The GroEL-GroES system forms a nano-cage that allows encapsulation of the non-native substrate proteins and provides a physical environment optimized to promote and accelerate protein folding. GroES binds to the apical surface of the GroEL ring, thereby capping the opening of the GroEL channel. This is Co-chaperonin GroES from Pseudomonas putida (Arthrobacter siderocapsulatus).